Reading from the N-terminus, the 615-residue chain is Filament-like plant protein 3 (615 aa).

Residues 1 to 18 (MDRRSWLWRRKSSEKSPG) show a composition bias toward basic and acidic residues. Residues 1-55 (MDRRSWLWRRKSSEKSPGETESTGSVSSHSERFSDDQRSQSPELNSKPVTREEEA) are disordered. Positions 19-28 (ETESTGSVSS) are enriched in polar residues. The segment covering 29 to 38 (HSERFSDDQR) has biased composition (basic and acidic residues). Positions 39 to 48 (SQSPELNSKP) are enriched in polar residues. Coiled-coil stretches lie at residues 87-121 (AEEA…LEDR) and 148-211 (EEAI…KSEE). Disordered stretches follow at residues 258 to 289 (DNSS…SPSE) and 319 to 343 (PHSE…HVNQ). The span at 262 to 288 (DLKSSIDNQSDYSGRVSFSDNEMQSPS) shows a compositional bias: polar residues. Residues 322–343 (EPGRKHSESNKELEKSNAHVNQ) are compositionally biased toward basic and acidic residues. Residues 327–563 (HSESNKELEK…KQELEHHQET (237 aa)) adopt a coiled-coil conformation.

It belongs to the FPP family. In terms of assembly, interacts with WPP/MAF proteins. Binds to COG2; this interaction promotes the association between cortical microtubules and EXO70A1. As to expression, accumulates in preferentially xylem cells.

Its subcellular location is the vesicle. In terms of biological role, ensures, when in complex with COG2 and FPP2/VETH2, the correct secondary cell wall (SCW) deposition pattern by recruiting exocyst components to cortical microtubules in xylem cells during secondary cell wall deposition by recruiting EXO70A1. The chain is Filament-like plant protein 3 from Arabidopsis thaliana (Mouse-ear cress).